The primary structure comprises 439 residues: MANTTPAVVMDNGTGFSKLGFAGNDSPSFVFPTAIATKSPSAGTGGSGSGRPAVANKPSFLTGGAGPGGHLSAKRGTEDLDYFIGDEAVAAANGPGYGLHYPIRHGQIENWDHMERFWSNSIFKYLRVEPEDHHFLLTEPPLNPPENRENTAEIFFESFNCAGLYIAVQAVLALAASWTSSKVQDRSLTGTVIDSGDGVTHVIPVAEGYVIGSSIKSIPIAGRDITYFVQSLLRDRGEPDSSLKTAQEIKEEYCYVCPDIVKEFAKYDRDRSRFLKHTITQPGGRQVTVDVGYERFMAPEIFFNPEIYSSDFLTPLPVVVDGVIQSSPIDVRRGLYKNIVLSGGSTLYKDFGRRLQRDIKQLVDTRIKASEVRSGGAKSGGLDVQVITHKRQRHGPWFGGSLLGQTPEFRSYCHTKAEYQEYGPSIVRRFALLGGPGGS.

The segment at 40–71 (PSAGTGGSGSGRPAVANKPSFLTGGAGPGGHL) is disordered.

It belongs to the actin family. ARP3 subfamily. In terms of assembly, component of the Arp2/3 complex composed.

It is found in the cytoplasm. The protein localises to the cytoskeleton. In terms of biological role, functions as ATP-binding component of the Arp2/3 complex which is involved in regulation of actin polymerization and together with an activating nucleation-promoting factor (NPF) mediates the formation of branched actin networks. Seems to contact the pointed end of the daughter actin filament. The sequence is that of Actin-related protein 3 (arp-3) from Neurospora crassa (strain ATCC 24698 / 74-OR23-1A / CBS 708.71 / DSM 1257 / FGSC 987).